The following is a 227-amino-acid chain: UPF0758 protein CPE2144 (227 aa).

Positions 105–227 (KISKPSDVAK…FISLKEKDIL (123 aa)) constitute an MPN domain. Zn(2+)-binding residues include His-176, His-178, and Asp-189. The JAMM motif motif lies at 176–189 (HNHPSGDPTPSRDD).

The protein belongs to the UPF0758 family.

The protein is UPF0758 protein CPE2144 of Clostridium perfringens (strain 13 / Type A).